Here is a 186-residue protein sequence, read N- to C-terminus: GTP-dependent dephospho-CoA kinase (186 aa).

GTP contacts are provided by Asp43, Ile44, Val45, Asp62, Glu120, and Asp143.

The protein belongs to the GTP-dependent DPCK family.

The enzyme catalyses 3'-dephospho-CoA + GTP = GDP + CoA + H(+). It participates in cofactor biosynthesis; coenzyme A biosynthesis. Its function is as follows. Catalyzes the GTP-dependent phosphorylation of the 3'-hydroxyl group of dephosphocoenzyme A to form coenzyme A (CoA). The sequence is that of GTP-dependent dephospho-CoA kinase from Haloquadratum walsbyi (strain DSM 16790 / HBSQ001).